Consider the following 126-residue polypeptide: Gene 82 protein (126 aa).

The protein is Gene 82 protein (82) of Mycobacterium phage L5 (Mycobacteriophage L5).